Reading from the N-terminus, the 40-residue chain is Hemoglobin subunit alpha-2 (40 aa).

Residues 1–40 (VGPHLDDYGGEALHRNFEVYPQTKTYFPHFDASAGSNQLK) form the Globin domain.

This sequence belongs to the globin family. In terms of assembly, heterotetramer of two alpha chains and two beta chains. In terms of tissue distribution, red blood cells.

Involved in oxygen transport from the lung to the various peripheral tissues. This is Hemoglobin subunit alpha-2 from Saara hardwickii (Indian spiny-tailed lizard).